The sequence spans 152 residues: Aspartate carbamoyltransferase regulatory chain (152 aa).

Zn(2+) is bound by residues C108, C113, C136, and C139.

The protein belongs to the PyrI family. Contains catalytic and regulatory chains. Requires Zn(2+) as cofactor.

Involved in allosteric regulation of aspartate carbamoyltransferase. The chain is Aspartate carbamoyltransferase regulatory chain from Pyrococcus furiosus (strain ATCC 43587 / DSM 3638 / JCM 8422 / Vc1).